The sequence spans 234 residues: 2-C-methyl-D-erythritol 4-phosphate cytidylyltransferase (234 aa).

It belongs to the IspD/TarI cytidylyltransferase family. IspD subfamily.

It carries out the reaction 2-C-methyl-D-erythritol 4-phosphate + CTP + H(+) = 4-CDP-2-C-methyl-D-erythritol + diphosphate. It functions in the pathway isoprenoid biosynthesis; isopentenyl diphosphate biosynthesis via DXP pathway; isopentenyl diphosphate from 1-deoxy-D-xylulose 5-phosphate: step 2/6. Catalyzes the formation of 4-diphosphocytidyl-2-C-methyl-D-erythritol from CTP and 2-C-methyl-D-erythritol 4-phosphate (MEP). The chain is 2-C-methyl-D-erythritol 4-phosphate cytidylyltransferase from Desulforamulus reducens (strain ATCC BAA-1160 / DSM 100696 / MI-1) (Desulfotomaculum reducens).